The following is a 321-amino-acid chain: ATP-dependent 6-phosphofructokinase (321 aa).

An ATP-binding site is contributed by glycine 12. Residues 22 to 26 and 55 to 60 contribute to the ADP site; these read RGVVR and RYSVSD. Residues 73–74 and 103–106 contribute to the ATP site; these read RF and GDGS. Residue aspartate 104 participates in Mg(2+) binding. 127–129 contributes to the substrate binding site; it reads TID. The Proton acceptor role is filled by aspartate 129. Arginine 156 contributes to the ADP binding site. Substrate-binding positions include arginine 164 and 171–173; that span reads MGR. Residues 187–189 and 215–217 contribute to the ADP site; these read GCE and KRH. Substrate-binding positions include glutamate 224, arginine 245, and 251 to 254; that span reads HVQR.

The protein belongs to the phosphofructokinase type A (PFKA) family. ATP-dependent PFK group I subfamily. Prokaryotic clade 'B1' sub-subfamily. In terms of assembly, homotetramer. Mg(2+) is required as a cofactor.

The protein resides in the cytoplasm. The catalysed reaction is beta-D-fructose 6-phosphate + ATP = beta-D-fructose 1,6-bisphosphate + ADP + H(+). Its pathway is carbohydrate degradation; glycolysis; D-glyceraldehyde 3-phosphate and glycerone phosphate from D-glucose: step 3/4. With respect to regulation, allosterically activated by ADP and other diphosphonucleosides, and allosterically inhibited by phosphoenolpyruvate. Functionally, catalyzes the phosphorylation of D-fructose 6-phosphate to fructose 1,6-bisphosphate by ATP, the first committing step of glycolysis. This Mannheimia succiniciproducens (strain KCTC 0769BP / MBEL55E) protein is ATP-dependent 6-phosphofructokinase.